Here is a 274-residue protein sequence, read N- to C-terminus: Coat protein (274 aa).

The segment at 88 to 112 is disordered; it reads RPAKQVLKGSSSKSQQRDEGEVVFT. Basic and acidic residues predominate over residues 102–112; that stretch reads QQRDEGEVVFT.

It is found in the virion. The sequence is that of Coat protein from Rubus idaeus (Raspberry).